The chain runs to 751 residues: Ribosome biogenesis protein ERB1 (751 aa).

Disordered regions lie at residues 1–140 (MALT…GNVP) and 289–336 (SEPS…DPED). Composition is skewed to acidic residues over residues 34-92 (LTDE…SDSD) and 119-129 (IEPDYDSDSST). The span at 294–305 (SQPPPLPAPKRP) shows a compositional bias: pro residues. Positions 323–336 (EEEKQEWLKQDPED) are enriched in basic and acidic residues. WD repeat units follow at residues 410–449 (HPKG…EIRR), 536–580 (PSSG…APFK), 582–621 (IKGA…KTLQ), 622–661 (PGIR…KPYK), 665–704 (YHSR…DLMT), and 720–751 (TDGL…VWCS).

This sequence belongs to the WD repeat BOP1/ERB1 family. In terms of assembly, component of the NOP7 complex, composed of ERB1, NOP7 and YTM1. The complex is held together by ERB1, which interacts with NOP7 via its N-terminal domain and with YTM1 via a high-affinity interaction between the seven-bladed beta-propeller domains of the 2 proteins. The NOP7 complex associates with the 66S pre-ribosome.

It is found in the nucleus. The protein localises to the nucleolus. Its subcellular location is the nucleoplasm. Component of the NOP7 complex, which is required for maturation of the 25S and 5.8S ribosomal RNAs and formation of the 60S ribosome. The chain is Ribosome biogenesis protein ERB1 from Coprinopsis cinerea (strain Okayama-7 / 130 / ATCC MYA-4618 / FGSC 9003) (Inky cap fungus).